A 161-amino-acid polypeptide reads, in one-letter code: Bifurcating [FeFe] hydrogenase gamma subunit (161 aa).

Residues Cys-78, Cys-83, Cys-119, and Cys-123 each contribute to the [2Fe-2S] cluster site.

This sequence belongs to the complex I 24 kDa subunit family. As to quaternary structure, heterotrimer composed of HydA (alpha subunit), HydB (beta subunit) and HydC (gamma subunit). Near neutral and acidic pH conditions favor oligomerization of the heterotrimeric holoenzyme. [2Fe-2S] cluster is required as a cofactor.

Its subcellular location is the cytoplasm. The enzyme catalyses 2 H2 + 2 oxidized [2Fe-2S]-[ferredoxin] + NAD(+) = 2 reduced [2Fe-2S]-[ferredoxin] + NADH + 3 H(+). Functionally, catalyzes the oxidation of the physiological electron carriers NADH and reduced ferredoxin, coupled to the production of H(2). Acts as a bifurcating [FeFe] hydrogenase, which uses the exergonic oxidation of reduced ferredoxin to drive the unfavorable oxidation of NADH to produce H(2). The gamma subunit might be the site where reduced ferredoxin is oxidized. In Thermotoga maritima (strain ATCC 43589 / DSM 3109 / JCM 10099 / NBRC 100826 / MSB8), this protein is Bifurcating [FeFe] hydrogenase gamma subunit.